The primary structure comprises 223 residues: Small ribosomal subunit protein uS3 (223 aa).

The region spanning 39-107 (VREFLHKKLA…PVQINIEEVR (69 aa)) is the KH type-2 domain.

The protein belongs to the universal ribosomal protein uS3 family. In terms of assembly, part of the 30S ribosomal subunit. Forms a tight complex with proteins S10 and S14.

Functionally, binds the lower part of the 30S subunit head. Binds mRNA in the 70S ribosome, positioning it for translation. In Francisella tularensis subsp. mediasiatica (strain FSC147), this protein is Small ribosomal subunit protein uS3.